A 123-amino-acid chain; its full sequence is Large ribosomal subunit protein bL12 (123 aa).

This sequence belongs to the bacterial ribosomal protein bL12 family. Homodimer. Part of the ribosomal stalk of the 50S ribosomal subunit. Forms a multimeric L10(L12)X complex, where L10 forms an elongated spine to which 2 to 4 L12 dimers bind in a sequential fashion. Binds GTP-bound translation factors.

Functionally, forms part of the ribosomal stalk which helps the ribosome interact with GTP-bound translation factors. Is thus essential for accurate translation. The protein is Large ribosomal subunit protein bL12 of Neisseria perflava.